We begin with the raw amino-acid sequence, 485 residues long: Ribulose bisphosphate carboxylase large chain (485 aa).

Positions 1 to 2 (MS) are excised as a propeptide. Pro-3 carries the post-translational modification N-acetylproline. Position 14 is an N6,N6,N6-trimethyllysine (Lys-14). Substrate is bound by residues Asn-123 and Thr-173. Lys-175 (proton acceptor) is an active-site residue. Lys-177 lines the substrate pocket. 3 residues coordinate Mg(2+): Lys-201, Asp-203, and Glu-204. N6-carboxylysine is present on Lys-201. His-294 serves as the catalytic Proton acceptor. Positions 295, 327, and 379 each coordinate substrate.

This sequence belongs to the RuBisCO large chain family. Type I subfamily. Heterohexadecamer of 8 large chains and 8 small chains; disulfide-linked. The disulfide link is formed within the large subunit homodimers. Mg(2+) serves as cofactor. The disulfide bond which can form in the large chain dimeric partners within the hexadecamer appears to be associated with oxidative stress and protein turnover.

It is found in the plastid. The protein localises to the chloroplast. The catalysed reaction is 2 (2R)-3-phosphoglycerate + 2 H(+) = D-ribulose 1,5-bisphosphate + CO2 + H2O. The enzyme catalyses D-ribulose 1,5-bisphosphate + O2 = 2-phosphoglycolate + (2R)-3-phosphoglycerate + 2 H(+). RuBisCO catalyzes two reactions: the carboxylation of D-ribulose 1,5-bisphosphate, the primary event in carbon dioxide fixation, as well as the oxidative fragmentation of the pentose substrate in the photorespiration process. Both reactions occur simultaneously and in competition at the same active site. This Helianthus annuus (Common sunflower) protein is Ribulose bisphosphate carboxylase large chain.